The chain runs to 1375 residues: uncharacterized protein (1375 aa).

The Helicase ATP-binding domain maps to 277–476 (LLASGDIRGG…FGLLFLLRYS (200 aa)). 290–297 (DEMGMGKT) contributes to the ATP binding site. The RING-type zinc finger occupies 1092-1130 (CIICRDIIKQGFITTCGHLYCSFCLEAWLKHSSSCPMCK). The Helicase C-terminal domain occupies 1190–1336 (TISKHLLYLK…QLDKLGLDVP (147 aa)).

It belongs to the SNF2/RAD54 helicase family.

The protein localises to the nucleus. This is an uncharacterized protein from Schizosaccharomyces pombe (strain 972 / ATCC 24843) (Fission yeast).